The sequence spans 200 residues: Dephospho-CoA kinase (200 aa).

The 198-residue stretch at 3–200 (VLGLTGSIGM…LSGKPAAATR (198 aa)) folds into the DPCK domain. 11–16 (GMGKTT) contacts ATP.

The protein belongs to the CoaE family.

It is found in the cytoplasm. It carries out the reaction 3'-dephospho-CoA + ATP = ADP + CoA + H(+). The protein operates within cofactor biosynthesis; coenzyme A biosynthesis; CoA from (R)-pantothenate: step 5/5. Its function is as follows. Catalyzes the phosphorylation of the 3'-hydroxyl group of dephosphocoenzyme A to form coenzyme A. The protein is Dephospho-CoA kinase of Brucella abortus (strain 2308).